The primary structure comprises 284 residues: ATP synthase subunit a (284 aa).

The next 6 helical transmembrane spans lie at 55–75 (AIHV…LGLF), 116–136 (IAPL…LKLI), 165–185 (FGMS…VKGV), 196–216 (PFNH…ALII), 234–254 (VVFI…NVPW), and 255–275 (AIFH…LTVV).

It belongs to the ATPase A chain family. As to quaternary structure, F-type ATPases have 2 components, CF(1) - the catalytic core - and CF(0) - the membrane proton channel. CF(1) has five subunits: alpha(3), beta(3), gamma(1), delta(1), epsilon(1). CF(0) has three main subunits: a(1), b(2) and c(9-12). The alpha and beta chains form an alternating ring which encloses part of the gamma chain. CF(1) is attached to CF(0) by a central stalk formed by the gamma and epsilon chains, while a peripheral stalk is formed by the delta and b chains.

It is found in the cell inner membrane. In terms of biological role, key component of the proton channel; it plays a direct role in the translocation of protons across the membrane. The sequence is that of ATP synthase subunit a from Marinobacter nauticus (strain ATCC 700491 / DSM 11845 / VT8) (Marinobacter aquaeolei).